A 447-amino-acid polypeptide reads, in one-letter code: Selenide, water dikinase 3 (447 aa).

Sec-50 is a catalytic residue. Sec-50 is a non-standard amino acid (selenocysteine). ATP-binding positions include Lys-53, 103 to 105, Asp-123, Asp-146, and 197 to 200; these read GMD and GGQT. Position 105 (Asp-105) interacts with Mg(2+). Mg(2+) is bound at residue Asp-146. Asp-301 contributes to the Mg(2+) binding site.

This sequence belongs to the selenophosphate synthase 1 family. Homodimer. It depends on Mg(2+) as a cofactor. In the embryo, expressed in retina, olfactory vesicles, tectum, pronephros ducts and myotomes at 24 hours post-fertilization and in retina, tectum, liver and intestinal bulb 3 days after fertilization.

It catalyses the reaction hydrogenselenide + ATP + H2O = selenophosphate + AMP + phosphate + 2 H(+). Synthesizes selenophosphate from selenide and ATP. In Danio rerio (Zebrafish), this protein is Selenide, water dikinase 3.